The following is a 181-amino-acid chain: Peptidyl-tRNA hydrolase (181 aa).

Tyr-14 is a tRNA binding site. His-19 functions as the Proton acceptor in the catalytic mechanism. The tRNA site is built by Tyr-62, Asn-64, and Asn-108.

The protein belongs to the PTH family. As to quaternary structure, monomer.

The protein localises to the cytoplasm. It carries out the reaction an N-acyl-L-alpha-aminoacyl-tRNA + H2O = an N-acyl-L-amino acid + a tRNA + H(+). Hydrolyzes ribosome-free peptidyl-tRNAs (with 1 or more amino acids incorporated), which drop off the ribosome during protein synthesis, or as a result of ribosome stalling. Its function is as follows. Catalyzes the release of premature peptidyl moieties from peptidyl-tRNA molecules trapped in stalled 50S ribosomal subunits, and thus maintains levels of free tRNAs and 50S ribosomes. The polypeptide is Peptidyl-tRNA hydrolase (Campylobacter jejuni subsp. doylei (strain ATCC BAA-1458 / RM4099 / 269.97)).